A 275-amino-acid polypeptide reads, in one-letter code: Nitrate import permease protein NrtB (275 aa).

7 consecutive transmembrane segments (helical) span residues 25 to 45 (VIRP…LCSG), 89 to 109 (VAVG…LIGS), 120 to 140 (IFQV…LAAL), 147 to 167 (AIFV…TVGA), 189 to 209 (FFNI…RIGI), 213 to 233 (WLAI…FFIW), and 238 to 258 (SSLI…GLLL). The ABC transmembrane type-1 domain occupies 82 to 262 (IFASLTRVAV…IVGLLLDRFI (181 aa)).

Belongs to the binding-protein-dependent transport system permease family. CysTW subfamily. In terms of assembly, the complex is composed of two ATP-binding proteins (NrtC and NrtD), two transmembrane proteins (NrtB) and a solute-binding protein (NrtA).

Its subcellular location is the cell inner membrane. Functionally, part of the ABC transporter complex NrtABCD involved in nitrate uptake. The complex is probably also involved in nitrite transport. Probably responsible for the translocation of the substrate across the membrane. The polypeptide is Nitrate import permease protein NrtB (nrtB) (Synechocystis sp. (strain ATCC 27184 / PCC 6803 / Kazusa)).